A 600-amino-acid polypeptide reads, in one-letter code: MNHQKYIRNFSIIAHIDHGKSTLADRLIEHCGGLQAREMSQQVLDSMDIEKERGITIKAQTVRLVYKAKDGNTYYLNLMDTPGHVDFAYEVSRSLAACEGSLLVVDSTQGVAAQTLANVYQAIENDHEIVLVLNKLDLPASEPEQVKQQIEDIIGIDTSDAVLISAKSGIGIDLVLEAIVNKLPPPKESSSDILKALLVDSWYDQYLGVVILVRVIDGYLRKNMRIKMMATNSVYTVENVGYFTPKKHISDVLHAGEIGFFTAAIKQVADCKVGDTITDEKKPCEQALPGFKPNLPVVFCGLYPTDSSEFEHLKDSLAKLRLNDASFEYEMESSSALGVGFRCGFLGLLHLEIIQERLSREFDLDLITTAPSVVYKIHMQDGENLEIHNPADLPNLQKIESMEEPWIKATIMVPDEFLGAVLSLCTEKRGMQLDHSYIANRAKIIYKLPLNEIVYDFYDRLKSCSKGYASFEWQMDVYEPSELVKLGILVNAEVVDALSTIVHRSRAEQRGRALCVRLKDLIPRQQIDIAIQASIGSRIIARETIKALRKDVLSKCYGGDISRKRKLLEKQKAGKKRMRQYGNIEIPQSAFIAALKIGDE.

Residues 5–187 (KYIRNFSIIA…AIVNKLPPPK (183 aa)) enclose the tr-type G domain. Residues 17 to 22 (DHGKST) and 134 to 137 (NKLD) contribute to the GTP site.

The protein belongs to the TRAFAC class translation factor GTPase superfamily. Classic translation factor GTPase family. LepA subfamily.

It localises to the cell inner membrane. It carries out the reaction GTP + H2O = GDP + phosphate + H(+). In terms of biological role, required for accurate and efficient protein synthesis under certain stress conditions. May act as a fidelity factor of the translation reaction, by catalyzing a one-codon backward translocation of tRNAs on improperly translocated ribosomes. Back-translocation proceeds from a post-translocation (POST) complex to a pre-translocation (PRE) complex, thus giving elongation factor G a second chance to translocate the tRNAs correctly. Binds to ribosomes in a GTP-dependent manner. This chain is Elongation factor 4, found in Rickettsia africae (strain ESF-5).